Consider the following 450-residue polypeptide: Na(+)/H(+) antiporter NhaA (450 aa).

11 helical membrane passes run 24–44 (FFAI…LALV), 75–95 (LILW…GLEI), 111–131 (ALPI…YLAL), 140–160 (GWGV…SLLG), 169–189 (VFLT…IAFF), 196–216 (FSFL…NWLG), 224–244 (LLVG…ATIA), 318–338 (WVAW…TVSA), 352–372 (IFFG…WLLV), 390–410 (GIGW…TLAF), and 422–442 (SILC…RVLL).

The protein belongs to the NhaA Na(+)/H(+) (TC 2.A.33) antiporter family.

It is found in the cell inner membrane. It catalyses the reaction Na(+)(in) + 2 H(+)(out) = Na(+)(out) + 2 H(+)(in). Its function is as follows. Na(+)/H(+) antiporter that extrudes sodium in exchange for external protons. The chain is Na(+)/H(+) antiporter NhaA from Oleidesulfovibrio alaskensis (strain ATCC BAA-1058 / DSM 17464 / G20) (Desulfovibrio alaskensis).